The following is a 1173-amino-acid chain: Pyruvate-flavodoxin oxidoreductase (1173 aa).

4Fe-4S ferredoxin-type domains lie at 681 to 710 (NVPVWQTDKCTQCNQCAFICPHAAIRPVLI) and 735 to 766 (YRLAVSPLDCSGCGNCADVCPVKGKALSMQPL). [4Fe-4S] cluster is bound by residues C690, C693, C696, C700, C744, C747, C750, C754, C810, C813, and C838. Over residues 922 to 933 (GEGTRERAEKVG) the composition is skewed to basic and acidic residues. The interval 922–946 (GEGTRERAEKVGDTSGFANAREKSR) is disordered. A [4Fe-4S] cluster-binding site is contributed by C1075.

Belongs to the pyruvate:ferredoxin/flavodoxin oxidoreductase family. [4Fe-4S] cluster serves as cofactor.

It carries out the reaction oxidized [flavodoxin] + pyruvate + CoA + 2 H(+) = reduced [flavodoxin] + acetyl-CoA + CO2. In terms of biological role, oxidoreductase required for the transfer of electrons from pyruvate to flavodoxin, which reduces nitrogenase. This chain is Pyruvate-flavodoxin oxidoreductase (nifJ), found in Enterobacter agglomerans (Erwinia herbicola).